The sequence spans 331 residues: Ketol-acid reductoisomerase (NADP(+)) (331 aa).

In terms of domain architecture, KARI N-terminal Rossmann spans 2-182 (AQLFYDSDAD…GGTRAGILET (181 aa)). NADP(+) is bound by residues 25 to 28 (YGSQ), Ser-51, Ser-53, and 83 to 86 (DEFQ). His-108 is a catalytic residue. Gly-134 lines the NADP(+) pocket. The KARI C-terminal knotted domain occupies 183–328 (NFKEETETDL…KGLRSMFSWL (146 aa)). Asp-191, Glu-195, Glu-227, and Glu-231 together coordinate Mg(2+). Substrate is bound at residue Ser-252.

This sequence belongs to the ketol-acid reductoisomerase family. It depends on Mg(2+) as a cofactor.

It carries out the reaction (2R)-2,3-dihydroxy-3-methylbutanoate + NADP(+) = (2S)-2-acetolactate + NADPH + H(+). The catalysed reaction is (2R,3R)-2,3-dihydroxy-3-methylpentanoate + NADP(+) = (S)-2-ethyl-2-hydroxy-3-oxobutanoate + NADPH + H(+). It participates in amino-acid biosynthesis; L-isoleucine biosynthesis; L-isoleucine from 2-oxobutanoate: step 2/4. Its pathway is amino-acid biosynthesis; L-valine biosynthesis; L-valine from pyruvate: step 2/4. Involved in the biosynthesis of branched-chain amino acids (BCAA). Catalyzes an alkyl-migration followed by a ketol-acid reduction of (S)-2-acetolactate (S2AL) to yield (R)-2,3-dihydroxy-isovalerate. In the isomerase reaction, S2AL is rearranged via a Mg-dependent methyl migration to produce 3-hydroxy-3-methyl-2-ketobutyrate (HMKB). In the reductase reaction, this 2-ketoacid undergoes a metal-dependent reduction by NADPH to yield (R)-2,3-dihydroxy-isovalerate. The polypeptide is Ketol-acid reductoisomerase (NADP(+)) (Parasynechococcus marenigrum (strain WH8102)).